We begin with the raw amino-acid sequence, 70 residues long: Small ribosomal subunit protein bS21 (70 aa).

This sequence belongs to the bacterial ribosomal protein bS21 family.

The protein is Small ribosomal subunit protein bS21 of Polaromonas naphthalenivorans (strain CJ2).